The chain runs to 2271 residues: Serine-rich adhesin for platelets (2271 aa).

Residues 1–89 (MSKRQKAFHD…VNMLHDQQAF (89 aa)) form the signal peptide. Residues 90 to 230 (AASDAPLTSE…KTSTTSTSTA (141 aa)) form a serine-rich repeat region 1, SRR1 region. The segment covering 100–111 (LNTQSETVGNQN) has biased composition (polar residues). 3 disordered regions span residues 100 to 229 (LNTQ…STST), 751 to 791 (NSMS…VVST), and 806 to 2243 (SVSA…GLLG). Residues 112-128 (STTIEASTSTADSTSVT) are compositionally biased toward low complexity. A compositionally biased stretch (polar residues) spans 129–140 (KNSSSVQTSNSD). Over residues 150-229 (VTSTTNSTSN…NKTSTTSTST (80 aa)) the composition is skewed to low complexity. Positions 231 to 751 (PVKLRTFSRL…TTFKYEVTRN (521 aa)) are non-repeat region (NRR). Composition is skewed to low complexity over residues 752–791 (SMSD…VVST), 806–1392 (SVSA…LSLS), and 1402–2214 (SNSA…ATSE). The serine-rich repeat region 2, SRR2 stretch occupies residues 752-2232 (SMSDSVSTSG…AQSEKRLPDT (1481 aa)). Residues 2229–2233 (LPDTG) carry the LPXTG sorting signal motif. T2232 carries the pentaglycyl murein peptidoglycan amidated threonine modification. The propeptide at 2233–2271 (GDSIKQNGLLGGVMTLLVGLGLMKRKKKKDENDQDDSQA) is removed by sortase.

This sequence belongs to the serine-rich repeat protein (SRRP) family. Proteolytically cleaved by a metalloprotease. Post-translationally, glycosylated. It is probable that most of the Ser residues in SSR1 and SSR2 are O-GlcNAcylated. Sequential glycosylation by sugar transferases are able to generate complex sugar polymorphisms.

The protein resides in the secreted. It localises to the cell wall. Mediates binding to human platelets, possibly through a receptor-ligand interaction. Probably associated with virulence in endovascular infection. In Staphylococcus aureus (strain Mu50 / ATCC 700699), this protein is Serine-rich adhesin for platelets (sraP).